The following is a 378-amino-acid chain: Coiled-coil domain-containing protein 74A (378 aa).

3 disordered regions span residues 1-52 (MSGA…RNLD), 128-211 (GGPS…EEPL), and 301-328 (EGSQRPQAAPEEASFPRDQEATHFPKVS). Residues 34–44 (LRPQSPQLRQS) are compositionally biased toward polar residues. The stretch at 47–90 (QKRNLDLEKSLQFLQQQHSEMLAKLHEEIEHLKRENKDLHYKLI) forms a coiled coil. Residues 141–151 (RTHRPGGKRGR) show a composition bias toward basic residues. The segment covering 165-182 (DSLSMSSFQSVKSISNSG) has biased composition (polar residues). Basic and acidic residues-rich tracts occupy residues 194-205 (QDSKADVSQKAD) and 314-323 (SFPRDQEATH).

The sequence is that of Coiled-coil domain-containing protein 74A (CCDC74A) from Homo sapiens (Human).